Reading from the N-terminus, the 1113-residue chain is Nucleoporin NUP116/NSP116 (1113 aa).

Residues methionine 1–alanine 35 form a disordered region. FG repeat units follow at residues phenylalanine 2–glycine 3, phenylalanine 17–glycine 18, phenylalanine 24–glycine 25, and phenylalanine 40–glycine 41. A compositionally biased stretch (low complexity) spans threonine 13 to proline 33. The tract at residues threonine 49 to glycine 91 is disordered. The GLFG 1; approximate repeat unit spans residues glycine 55–glycine 58. 3 FG repeats span residues phenylalanine 66 to glycine 67, phenylalanine 79 to glycine 80, and phenylalanine 94 to glycine 95. Positions serine 92–asparagine 172 are interaction with AFG2. The tract at residues valine 110 to lysine 166 is GLE2 binding sequence (GLEBS). The tract at residues aspartate 160–glycine 362 is interaction with MEX67, not KAP95. 2 FG repeats span residues phenylalanine 167–glycine 168 and phenylalanine 189–glycine 190. The GLFG 2 repeat unit spans residues glycine 205–glycine 208. The stretch at glycine 214 to glycine 217 is one GLFG 3; approximate repeat. The stretch at glycine 224–glycine 227 is one GLFG 4; approximate repeat. A GLFG 5 repeat occupies glycine 235–glycine 238. One copy of the FG 10 repeat lies at phenylalanine 249 to glycine 250. 3 GLFG repeats span residues glycine 259 to glycine 262, glycine 276 to glycine 279, and glycine 288 to glycine 291. Low complexity predominate over residues threonine 265–glycine 279. The interval threonine 265–phenylalanine 341 is disordered. Polar residues predominate over residues glutamine 280–asparagine 304. Residues phenylalanine 297 to glycine 298 form an FG 11 repeat. A GLFG 9; approximate repeat occupies glycine 306–glycine 309. The stretch at glycine 327 to glycine 330 is one GLFG 10; approximate repeat. Residues glycine 330–phenylalanine 341 are compositionally biased toward low complexity. Residues glycine 339 to glycine 342 form a GLFG 11; approximate repeat. Residues phenylalanine 351 to glycine 352 form an FG 12 repeat. The stretch at glycine 359–glycine 362 is one GLFG 12 repeat. The segment at glycine 362–threonine 535 is sufficient for interaction with MEX67 and KAP95. The stretch at phenylalanine 370–glycine 371 is one FG 13 repeat. Positions glycine 371–phenylalanine 606 are disordered. GLFG repeat units follow at residues glycine 382–glycine 385, glycine 395–glycine 398, glycine 407–glycine 410, and glycine 420–glycine 423. The span at glycine 410–glycine 438 shows a compositional bias: low complexity. An FG 14 repeat occupies phenylalanine 431–glycine 432. GLFG repeat units lie at residues glycine 439 to glycine 442 and glycine 448 to glycine 451. Residues glycine 451–alanine 464 are compositionally biased toward polar residues. Composition is skewed to low complexity over residues glutamine 465–glutamine 478 and glycine 485–asparagine 522. The stretch at phenylalanine 470–glycine 471 is one FG 15 repeat. GLFG repeat units follow at residues glycine 482–glycine 485 and glycine 497–glycine 500. FG repeat units lie at residues phenylalanine 510 to glycine 511, phenylalanine 525 to glycine 526, and phenylalanine 532 to glycine 533. A compositionally biased stretch (polar residues) spans phenylalanine 532 to alanine 569. Positions serine 536–glutamine 732 are interaction with KAP95, not MEX67. GLFG repeat units follow at residues glycine 572–glycine 575, glycine 585–glycine 588, and glycine 604–glycine 607. The span at glycine 588–glycine 603 shows a compositional bias: polar residues. One copy of the FG 19 repeat lies at phenylalanine 616 to glycine 617. One copy of the GLFG 24; approximate repeat lies at glycine 630–glycine 633. GLFG repeat units follow at residues glycine 648–glycine 651, glycine 665–glycine 668, and glycine 683–glycine 686. The segment covering serine 678–serine 691 has biased composition (low complexity). Disordered regions lie at residues serine 678–arginine 736 and serine 868–alanine 939. A compositionally biased stretch (polar residues) spans glutamine 692–threonine 708. The span at glutamine 719–arginine 736 shows a compositional bias: low complexity. At serine 886 the chain carries Phosphoserine. Positions asparagine 916–alanine 939 are enriched in basic and acidic residues. Residues asparagine 967–alanine 1109 form the Peptidase S59 domain. The interaction with NUP82 NPC subcomplex stretch occupies residues asparagine 967–threonine 1113. The segment at asparagine 969–histidine 1108 is nucleoporin RNA-binding motif (NRM).

It belongs to the nucleoporin GLFG family. As to quaternary structure, component of the nuclear pore complex (NPC). NPC constitutes the exclusive means of nucleocytoplasmic transport. NPCs allow the passive diffusion of ions and small molecules and the active, nuclear transport receptor-mediated bidirectional transport of macromolecules such as proteins, RNAs, ribonucleoparticles (RNPs), and ribosomal subunits across the nuclear envelope. Due to its 8-fold rotational symmetry, all subunits are present with 8 copies or multiples thereof. NUP116 interacts with the NUP82 subcomplex and GLE2. Through its FG repeats it interacts with numerous karyopherins including KAP95, PSE1 (GSP1-GDP dependent), MEX67, and to homomeric RNA. Interacts with CEX1. Interacts (via N-terminus) with AFG2 (via N-terminus).

It localises to the nucleus. It is found in the nuclear pore complex. The protein localises to the nucleus membrane. In terms of biological role, functions as a component of the nuclear pore complex (NPC). NPC components, collectively referred to as nucleoporins (NUPs), can play the role of both NPC structural components and of docking or interaction partners for transiently associated nuclear transport factors. Active directional transport is assured by both, a Phe-Gly (FG) repeat affinity gradient for these transport factors across the NPC and a transport cofactor concentration gradient across the nuclear envelope (GSP1 and GSP2 GTPases associated predominantly with GTP in the nucleus, with GDP in the cytoplasm). Plays an important role in several nuclear export and import pathways including poly(A)+ RNA, tRNA, pre-ribosome, and protein transport. By binding ATPase AFG2, promotes AFG2-mediated release of shuttling protein RLP24 from pre-60S ribosomal particles. The sequence is that of Nucleoporin NUP116/NSP116 (NUP116) from Saccharomyces cerevisiae (strain ATCC 204508 / S288c) (Baker's yeast).